Consider the following 480-residue polypeptide: 2-phosphoxylose phosphatase 1 (480 aa).

At 1–6 (MLYRNR) the chain is on the cytoplasmic side. Residues 7–27 (FLVLLALAGLLAFLSLSLQFF) form a helical; Signal-anchor for type II membrane protein membrane-spanning segment. Topologically, residues 28–480 (HLIPVSTTKN…YYDACHGEGA (453 aa)) are lumenal. Catalysis depends on histidine 97, which acts as the Nucleophile. N-linked (GlcNAc...) asparagine glycans are attached at residues asparagine 194, asparagine 305, and asparagine 354. The Proton donor role is filled by aspartate 379.

Belongs to the histidine acid phosphatase family. In terms of assembly, interacts with B3GAT3; the interaction increases the 2-phosphoxylose phosphatase activity of PXYLP1 during completion of linkage region formation in a B3GAT3-mediated manner.

The protein localises to the golgi apparatus membrane. It catalyses the reaction 3-O-[beta-D-GlcA-(1-&gt;3)-beta-D-Gal-(1-&gt;3)-beta-D-Gal-(1-&gt;4)-beta-D-2-O-P-Xyl]-L-seryl-[protein] + H2O = 3-O-(beta-D-GlcA-(1-&gt;3)-beta-D-Gal-(1-&gt;3)-beta-D-Gal-(1-&gt;4)-beta-D-Xyl)-L-seryl-[protein] + phosphate. In terms of biological role, responsible for the 2-O-dephosphorylation of xylose in the glycosaminoglycan-protein linkage region of proteoglycans thereby regulating the amount of mature glycosaminoglycan (GAG) chains. Sulfated glycosaminoglycans (GAGs), including heparan sulfate and chondroitin sulfate, are synthesized on the so-called common GAG-protein linkage region (GlcUAbeta1-3Galbeta1-3Galbeta1-4Xylbeta1-O-Ser) of core proteins, which is formed by the stepwise addition of monosaccharide residues by the respective specific glycosyltransferases. Xylose 2-O-dephosphorylation during completion of linkage region formation is a prerequisite for the initiation and efficient elongation of the repeating disaccharide region of GAG chains. The chain is 2-phosphoxylose phosphatase 1 from Rattus norvegicus (Rat).